The following is a 181-amino-acid chain: Type II secretion system protein H (181 aa).

Positions 1–5 (MRQRG) are cleaved as a propeptide — leader sequence. F6 is modified (N-methylphenylalanine). Residues 6–29 (FTLLEIMLVVLLAGVAATLVMMAI) traverse the membrane as a helical segment.

It belongs to the GSP H family. As to quaternary structure, type II secretion is composed of four main components: the outer membrane complex, the inner membrane complex, the cytoplasmic secretion ATPase and the periplasm-spanning pseudopilus. Interacts with core component OutG. In terms of processing, cleaved by prepilin peptidase. Post-translationally, methylated by prepilin peptidase at the amino group of the N-terminal phenylalanine once the leader sequence is cleaved by prepilin peptidase.

Its subcellular location is the cell inner membrane. In terms of biological role, component of the type II secretion system required for the energy-dependent secretion of extracellular factors such as proteases and toxins from the periplasm. Part of the pseudopilus tip complex that is critical for the recognition and binding of secretion substrates. The sequence is that of Type II secretion system protein H (outH) from Dickeya chrysanthemi (Pectobacterium chrysanthemi).